A 479-amino-acid polypeptide reads, in one-letter code: GTPase Der (479 aa).

EngA-type G domains follow at residues 3-166 (PVVA…AEEY) and 192-365 (LKLA…ASAT). Residues 9-16 (GRPNVGKS), 56-60 (DTGGI), 118-121 (NKID), 198-205 (GRPNVGKS), 245-249 (DTAGV), and 310-313 (NKWD) contribute to the GTP site. The KH-like domain occupies 366-450 (QRISTSKLTK…PIKVEFREPV (85 aa)).

This sequence belongs to the TRAFAC class TrmE-Era-EngA-EngB-Septin-like GTPase superfamily. EngA (Der) GTPase family. Associates with the 50S ribosomal subunit.

In terms of biological role, GTPase that plays an essential role in the late steps of ribosome biogenesis. This chain is GTPase Der, found in Idiomarina loihiensis (strain ATCC BAA-735 / DSM 15497 / L2-TR).